Reading from the N-terminus, the 633-residue chain is Transcriptional repressor p66-alpha (633 aa).

Over residues 1–18 (MTEEACRTRSQKRALERD) the composition is skewed to basic and acidic residues. Disordered regions lie at residues 1 to 59 (MTEE…PTQG) and 73 to 119 (RGEG…RVNG). Phosphothreonine occurs at positions 20 and 49. Basic and acidic residues predominate over residues 86–99 (RTSHSDMKSERRPP). K93 is covalently cross-linked (Glycyl lysine isopeptide (Lys-Gly) (interchain with G-Cter in SUMO2)). 5 positions are modified to phosphoserine: S100, S107, S113, S114, and S137. Residues 108–119 (DNEQPSSPRVNG) are compositionally biased toward polar residues. A coiled-coil region spans residues 139–174 (EERERMIKQLKEELRLEEAKLVLLKKLRQSQIQKEA). The CR1; interaction with HDAC1, HDAC2, MBD2 and MTA2 stretch occupies residues 144 to 178 (MIKQLKEELRLEEAKLVLLKKLRQSQIQKEATAQK). A compositionally biased stretch (polar residues) spans 172–188 (KEATAQKPTGSVGSTVT). A disordered region spans residues 172 to 238 (KEATAQKPTG…QASSKLGPQA (67 aa)). Residue K178 forms a Glycyl lysine isopeptide (Lys-Gly) (interchain with G-Cter in SUMO2) linkage. An interaction with ZMYND8 region spans residues 181 to 295 (GSVGSTVTTP…IIQQGLIRVA (115 aa)). T189 carries the post-translational modification Phosphothreonine. A compositionally biased stretch (polar residues) spans 196–212 (GTQNIPAGKPSLQTSSA). Residue K204 forms a Glycyl lysine isopeptide (Lys-Gly) (interchain with G-Cter in SUMO2) linkage. R225 is subject to Omega-N-methylarginine. Polar residues predominate over residues 228 to 238 (QQASSKLGPQA). Residue K233 forms a Glycyl lysine isopeptide (Lys-Gly) (interchain with G-Cter in SUMO2) linkage. An omega-N-methylarginine mark is found at R249, R258, and R273. S275 carries the post-translational modification Phosphoserine. Omega-N-methylarginine is present on R285. 2 positions are modified to phosphoserine: S340 and S343. Residues 340-480 (SPASRQAAAK…EIEQRLLQQG (141 aa)) form a CR2; histone tail-binding and interaction with CHD4 and CDK2AP1 region. Residues 411 to 464 (SREPYMCAQCKTDFTCRWREEKSGAIMCENCMTTNQKKALKVEHTSRLKAAFVK) form a GATA-type zinc finger. Glycyl lysine isopeptide (Lys-Gly) (interchain with G-Cter in SUMO2) cross-links involve residues K464 and K487. Position 512 is a phosphoserine (S512). The residue at position 539 (R539) is an Asymmetric dimethylarginine; alternate. Position 539 is an omega-N-methylarginine; alternate (R539). Phosphoserine occurs at positions 546 and 548. Residue K550 forms a Glycyl lysine isopeptide (Lys-Gly) (interchain with G-Cter in SUMO2) linkage. At S556 the chain carries Phosphoserine. A disordered region spans residues 561 to 585 (VSRTGRHSERTVSAGKGSATSNWKK). A Glycyl lysine isopeptide (Lys-Gly) (interchain with G-Cter in SUMO2) cross-link involves residue K585. Phosphoserine is present on S598. A Glycyl lysine isopeptide (Lys-Gly) (interchain with G-Cter in SUMO2) cross-link involves residue K605.

Homooligomer. Component of the nucleosome remodeling and deacetylase (NuRD) repressor complex, composed of core proteins MTA1, MTA2, MTA3, RBBP4, RBBP7, HDAC1, HDAC2, MBD2, MBD3, and peripherally associated proteins CDK2AP1, CDK2AP2, GATAD2A, GATAD2B, CHD3, CHD4 and CHD5. The exact stoichiometry of the NuRD complex is unknown, and some subunits such as MBD2 and MBD3, GATAD2A and GATAD2B, and CHD3, CHD4 and CHD5 define mutually exclusive NuRD complexes. Component of the MeCP1 histone deacetylase complex. Interacts with CDK2AP1. Interacts with CHD4. Interacts with ERCC6. Interacts with HDAC1. Interacts with HDAC2. Interacts with MBD2; this interaction is required for the enhancement of MBD2-mediated repression and for targeting to the chromatin. Interacts with MBD3. Interacts with MTA2. Interacts with ZMYND8. Interacts with histone tails, including that of histones H2A, H2B, H3 and H4, the interaction is reduced by histone acetylation. As to expression, ubiquitous, both in fetal and adult tissues.

It localises to the nucleus speckle. Its subcellular location is the nucleus. The protein resides in the chromosome. Functionally, transcriptional repressor. Acts as a component of the histone deacetylase NuRD complex which participates in the remodeling of chromatin. Enhances MBD2-mediated repression. Efficient repression requires the presence of GATAD2B. This Homo sapiens (Human) protein is Transcriptional repressor p66-alpha (GATAD2A).